The chain runs to 361 residues: Outer membrane protein P2 (361 aa).

The first 20 residues, 1 to 20 (MKKTLAALIVGAFAASAANA), serve as a signal peptide directing secretion.

The protein belongs to the Gram-negative porin family. In terms of assembly, homotrimer.

The protein resides in the cell outer membrane. Its function is as follows. Forms pores that allow passive diffusion of small molecules across the outer membrane. The chain is Outer membrane protein P2 (ompP2) from Haemophilus influenzae.